The primary structure comprises 308 residues: MGNTLGLAPMGALPRRSPRREEPLPNPGSFDELHRLCKDVFPAQMEGVKLVVNKVLSSHFQVAHTVHMSALGLPGYHLHAAYAGDWQLSPTEVFPTVVGDMDSGGSLNAQVLLLLAERLRAKAVFQTQQAKFLTWQFDGEYRGDDYTATLTLGNPDLIGESVIVVAHFLQSLTHRLVLGGELVYHRRPGEEGAILTLAGKYSAVHWVATLNVGSGGAHASYYHRANEQVQVGVEFEANTRLQDTTFSFGYHLTLPQANMVFRGLVDSNWCVGAVLEKKMPPLPVTLALGAFLNHWRNRFHCGFSITVG.

The interval methionine 1–serine 29 is disordered. A required for mitochondrial targeting region spans residues proline 281–glycine 308.

It belongs to the Tom40 family. As to quaternary structure, forms part of the preprotein translocase of the outer mitochondrial membrane (TOM complex) containing TOMM22, TOMM40, TOMM40L and TOMM70. Interacts with mitochondrial targeting sequences.

The protein localises to the mitochondrion outer membrane. Functionally, potential channel-forming protein implicated in import of protein precursors into mitochondria. The protein is Mitochondrial import receptor subunit TOM40B of Bos taurus (Bovine).